Here is a 76-residue protein sequence, read N- to C-terminus: uncharacterized protein (76 aa).

This is an uncharacterized protein from Archaeoglobus fulgidus (strain ATCC 49558 / DSM 4304 / JCM 9628 / NBRC 100126 / VC-16).